Reading from the N-terminus, the 239-residue chain is Regulator of G-protein signaling 20 (239 aa).

The tract at residues 1-29 is disordered; sequence MRTANGGPRARASPSASPADPGLPEGSER. Low complexity predominate over residues 8 to 19; sequence PRARASPSASPA. The RGS domain occupies 113–229; sequence SFDNLMVTPA…MNSTVYKDLL (117 aa).

In terms of assembly, forms a complex with G(alpha)z/i2 subunits and mu-opioid receptors; the formation of this complex results in mu-opioid receptor desensitization. Interacts with OPRM1. Fatty acylated. Heavily palmitoylated in the cysteine string motif. Post-translationally, N- and O-glycosylated in synapsomal membranes. In terms of processing, serine phosphorylated in synapsomal membranes. Sumoylated with SUMO1, SUMO2 and SUMO3. Sumoylation increases binding to the G-proteins, G(alpha)-i2 and G(z), and interaction with mu-opioid receptors.

It localises to the membrane. Its subcellular location is the nucleus. The protein localises to the cytoplasm. In terms of biological role, inhibits signal transduction by increasing the GTPase activity of G protein alpha subunits thereby driving them into their inactive GDP-bound form. Binds selectively to G(z)-alpha and G(alpha)-i2 subunits, accelerates their GTPase activity and regulates their signaling activities. The G(z)-alpha activity is inhibited by the phosphorylation and palmitoylation of the G-protein. Negatively regulates mu-opioid receptor-mediated activation of the G-proteins. The protein is Regulator of G-protein signaling 20 (Rgs20) of Mus musculus (Mouse).